The primary structure comprises 565 residues: 4-coumarate--CoA ligase-like 2 (565 aa).

Residues S221, S222, G223, T224, T225, and K229 each contribute to the ATP site. Residue F265 participates in (E)-4-coumaroyl-AMP binding. Position 286 (K286) interacts with CoA. Positions 288–359 (DMAKLLSAVE…ENYPKVKILQ (72 aa)) are SBD1. The (E)-4-coumaroyl-AMP site is built by G337, Q359, G360, and T364. ATP-binding residues include Q359, G360, T364, D445, and R460. An SBD2 region spans residues 360–424 (GYGLTESTAI…IRSPTVMKGY (65 aa)). 2 residues coordinate (E)-4-coumaroyl-AMP: K462 and K466. A CoA-binding site is contributed by G469. ATP is bound at residue K551. Residues 563-565 (SKL) carry the Microbody targeting signal motif.

The protein belongs to the ATP-dependent AMP-binding enzyme family. It depends on Mg(2+) as a cofactor.

The protein localises to the peroxisome. The catalysed reaction is (E)-4-coumarate + ATP + CoA = (E)-4-coumaroyl-CoA + AMP + diphosphate. The enzyme catalyses (E)-4-coumarate + ATP + H(+) = (E)-4-coumaroyl-AMP + diphosphate. It catalyses the reaction (E)-4-coumaroyl-AMP + CoA = (E)-4-coumaroyl-CoA + AMP + H(+). In terms of biological role, carboxylate--CoA ligase that may use 4-coumarate as substrate. Follows a two-step reaction mechanism, wherein the carboxylate substrate first undergoes adenylation by ATP, followed by a thioesterification in the presence of CoA to yield the final CoA thioester. The polypeptide is 4-coumarate--CoA ligase-like 2 (Arabidopsis thaliana (Mouse-ear cress)).